The following is a 170-amino-acid chain: Adenine phosphoribosyltransferase (170 aa).

It belongs to the purine/pyrimidine phosphoribosyltransferase family. As to quaternary structure, homodimer.

It localises to the cytoplasm. The catalysed reaction is AMP + diphosphate = 5-phospho-alpha-D-ribose 1-diphosphate + adenine. The protein operates within purine metabolism; AMP biosynthesis via salvage pathway; AMP from adenine: step 1/1. Its function is as follows. Catalyzes a salvage reaction resulting in the formation of AMP, that is energically less costly than de novo synthesis. This is Adenine phosphoribosyltransferase from Thermotoga sp. (strain RQ2).